We begin with the raw amino-acid sequence, 722 residues long: Catalase B (722 aa).

The signal sequence occupies residues 1 to 15 (MRALGLVGLVGVANA). Catalysis depends on residues H100 and N173. Y388 serves as a coordination point for heme.

Belongs to the catalase family. Heme is required as a cofactor.

Its subcellular location is the secreted. The catalysed reaction is 2 H2O2 = O2 + 2 H2O. Its function is as follows. Occurs in almost all aerobically respiring organisms and serves to protect cells from the toxic effects of hydrogen peroxide. In Emericella nidulans (strain FGSC A4 / ATCC 38163 / CBS 112.46 / NRRL 194 / M139) (Aspergillus nidulans), this protein is Catalase B (catB).